The chain runs to 374 residues: Pectate lyase 2 (374 aa).

The first 22 residues, 1–22 (MKYLLPTAAAGLLLLAAQPAMA), serve as a signal peptide directing secretion. The cysteines at positions 93 and 176 are disulfide-linked. Residues aspartate 150, aspartate 152, glutamate 187, and aspartate 191 each contribute to the Ca(2+) site. Arginine 239 is an active-site residue. A disulfide bridge connects residues cysteine 350 and cysteine 373.

Belongs to the polysaccharide lyase 1 family. PLADES subfamily. Ca(2+) is required as a cofactor.

It localises to the secreted. The enzyme catalyses Eliminative cleavage of (1-&gt;4)-alpha-D-galacturonan to give oligosaccharides with 4-deoxy-alpha-D-galact-4-enuronosyl groups at their non-reducing ends.. It participates in glycan metabolism; pectin degradation; 2-dehydro-3-deoxy-D-gluconate from pectin: step 2/5. Functionally, involved in maceration and soft-rotting of plant tissue. The polypeptide is Pectate lyase 2 (pel2) (Pectobacterium carotovorum (Erwinia carotovora)).